Consider the following 441-residue polypeptide: Cortexillin-2 (441 aa).

The actin-binding stretch occupies residues M1–A229. Calponin-homology (CH) domains are found at residues K9 to R117 and K126 to R231. Coiled-coil stretches lie at residues A229 to L362 and S406 to N430.

The protein belongs to the cortexillin family. In terms of assembly, homodimer; parallel.

It is found in the cytoplasm. It localises to the cytoskeleton. Its function is as follows. Actin-bundling protein. When linked to F-actin the actin filaments form preferentially anti-parallel bundles that associate into meshworks. Plays a major role in cytokinesis. Negatively regulates cortical localization of rapgap1. The polypeptide is Cortexillin-2 (ctxB) (Dictyostelium discoideum (Social amoeba)).